Consider the following 1584-residue polypeptide: Cilia- and flagella-associated protein 74 (1584 aa).

The stretch at arginine 300–glutamine 379 forms a coiled coil. The segment covering serine 692–methionine 706 has biased composition (polar residues). A disordered region spans residues serine 692–glutamate 739. Residues glutamine 707–lysine 717 show a composition bias toward basic and acidic residues.

The protein belongs to the CFAP74 family.

It is found in the cytoplasm. The protein localises to the cytoskeleton. It localises to the cilium axoneme. Its subcellular location is the flagellum axoneme. Its function is as follows. As part of the central apparatus of the cilium axoneme may play a role in cilium movement. May play an important role in sperm architecture and function. The polypeptide is Cilia- and flagella-associated protein 74 (Homo sapiens (Human)).